A 546-amino-acid polypeptide reads, in one-letter code: Chaperonin GroEL (546 aa).

Residues 30–33, 87–91, Gly414, 477–479, and Asp493 each bind ATP; these read TLGP, DGTTT, and NAL.

The protein belongs to the chaperonin (HSP60) family. As to quaternary structure, forms a cylinder of 14 subunits composed of two heptameric rings stacked back-to-back. Interacts with the co-chaperonin GroES.

It is found in the cytoplasm. It carries out the reaction ATP + H2O + a folded polypeptide = ADP + phosphate + an unfolded polypeptide.. Functionally, together with its co-chaperonin GroES, plays an essential role in assisting protein folding. The GroEL-GroES system forms a nano-cage that allows encapsulation of the non-native substrate proteins and provides a physical environment optimized to promote and accelerate protein folding. The polypeptide is Chaperonin GroEL (Syntrophomonas wolfei subsp. wolfei (strain DSM 2245B / Goettingen)).